The primary structure comprises 127 residues: Phosphoribosyl-AMP cyclohydrolase (127 aa).

Asp-96 serves as a coordination point for Mg(2+). Cys-97 lines the Zn(2+) pocket. Asp-98 and Asp-100 together coordinate Mg(2+). Cys-113 and Cys-120 together coordinate Zn(2+).

It belongs to the PRA-CH family. Homodimer. Mg(2+) serves as cofactor. The cofactor is Zn(2+).

It is found in the cytoplasm. The enzyme catalyses 1-(5-phospho-beta-D-ribosyl)-5'-AMP + H2O = 1-(5-phospho-beta-D-ribosyl)-5-[(5-phospho-beta-D-ribosylamino)methylideneamino]imidazole-4-carboxamide. Its pathway is amino-acid biosynthesis; L-histidine biosynthesis; L-histidine from 5-phospho-alpha-D-ribose 1-diphosphate: step 3/9. Functionally, catalyzes the hydrolysis of the adenine ring of phosphoribosyl-AMP. The sequence is that of Phosphoribosyl-AMP cyclohydrolase from Corynebacterium jeikeium (strain K411).